Here is a 27-residue protein sequence, read N- to C-terminus: M-ectatotoxin-Eb2a (27 aa).

As to expression, expressed by the venom gland.

Its subcellular location is the secreted. In terms of biological role, antimicrobial peptide forming an alpha-helix in watery and membraneous environments, enabling it to perforate membranes. Active against Gram-negative bacteria E.coli DH5alpha (MIC=5 uM), E.coli MH1 (MIC=0.6 uM) and P.aeruginosa PAO1 (MIC=10 uM) and against Gram-positive bacteria B.subtilis VKM B-501 (MIC=0.6 uM) and A.globiformis VKM Ac-1112 (MIC=0.2 uM). Has cytolytic and hemolytic activity. The polypeptide is M-ectatotoxin-Eb2a (Ectatomma brunneum (Ant)).